The sequence spans 252 residues: Glycerol-3-phosphate acyltransferase (252 aa).

6 consecutive transmembrane segments (helical) span residues 6–26 (SVAM…YLIG), 66–86 (ILTL…TYII), 104–124 (AILV…PIFF), 140–160 (ITID…ILLI), 164–184 (MSLS…IPGI), and 204–224 (VIKG…ILIY).

This sequence belongs to the PlsY family. In terms of assembly, probably interacts with PlsX.

Its subcellular location is the cell membrane. It carries out the reaction an acyl phosphate + sn-glycerol 3-phosphate = a 1-acyl-sn-glycero-3-phosphate + phosphate. It functions in the pathway lipid metabolism; phospholipid metabolism. Functionally, catalyzes the transfer of an acyl group from acyl-phosphate (acyl-PO(4)) to glycerol-3-phosphate (G3P) to form lysophosphatidic acid (LPA). This enzyme utilizes acyl-phosphate as fatty acyl donor, but not acyl-CoA or acyl-ACP. The protein is Glycerol-3-phosphate acyltransferase of Ureaplasma urealyticum serovar 10 (strain ATCC 33699 / Western).